The chain runs to 240 residues: uncharacterized protein (240 aa).

Residue D66 is the Proton acceptor of the active site. D129 is an active-site residue. The Proton acceptor role is filled by H131.

It belongs to the glucosamine/galactosamine-6-phosphate isomerase family.

This is an uncharacterized protein from Escherichia coli (strain K12).